The chain runs to 100 residues: Defensin-B4 (100 aa).

The first 22 residues, 1-22 (MRASLLLFILLVYLAHAPQAQG), serve as a signal peptide directing secretion. The propeptide occupies 23–26 (VFGP). Intrachain disulfides connect cysteine 29-cysteine 56, cysteine 36-cysteine 50, and cysteine 40-cysteine 57. Positions 60–100 (STGTSSSQGSHEVPVINSEPALESKPEPQDTQEEEATMVSE) are disordered. Residues 89-100 (DTQEEEATMVSE) show a composition bias toward acidic residues.

This sequence belongs to the beta-defensin family. In terms of tissue distribution, highly expressed in kidney, lowly expressed in spleen, and expressed at lower levels in lung.

Its subcellular location is the secreted. Functionally, has antimicrobial activity. This chain is Defensin-B4, found in Ornithorhynchus anatinus (Duckbill platypus).